The chain runs to 224 residues: Phosphoribosylformylglycinamidine synthase subunit PurQ (224 aa).

The Glutamine amidotransferase type-1 domain maps to 4 to 224 (FGIIVFPGSN…ATDGLAMFIS (221 aa)). Residue Cys-87 is the Nucleophile of the active site. Active-site residues include His-204 and Glu-206.

As to quaternary structure, part of the FGAM synthase complex composed of 1 PurL, 1 PurQ and 2 PurS subunits.

The protein localises to the cytoplasm. The catalysed reaction is N(2)-formyl-N(1)-(5-phospho-beta-D-ribosyl)glycinamide + L-glutamine + ATP + H2O = 2-formamido-N(1)-(5-O-phospho-beta-D-ribosyl)acetamidine + L-glutamate + ADP + phosphate + H(+). The enzyme catalyses L-glutamine + H2O = L-glutamate + NH4(+). The protein operates within purine metabolism; IMP biosynthesis via de novo pathway; 5-amino-1-(5-phospho-D-ribosyl)imidazole from N(2)-formyl-N(1)-(5-phospho-D-ribosyl)glycinamide: step 1/2. Part of the phosphoribosylformylglycinamidine synthase complex involved in the purines biosynthetic pathway. Catalyzes the ATP-dependent conversion of formylglycinamide ribonucleotide (FGAR) and glutamine to yield formylglycinamidine ribonucleotide (FGAM) and glutamate. The FGAM synthase complex is composed of three subunits. PurQ produces an ammonia molecule by converting glutamine to glutamate. PurL transfers the ammonia molecule to FGAR to form FGAM in an ATP-dependent manner. PurS interacts with PurQ and PurL and is thought to assist in the transfer of the ammonia molecule from PurQ to PurL. The polypeptide is Phosphoribosylformylglycinamidine synthase subunit PurQ (Synechocystis sp. (strain ATCC 27184 / PCC 6803 / Kazusa)).